A 157-amino-acid polypeptide reads, in one-letter code: Biotin carboxyl carrier protein of acetyl-CoA carboxylase (157 aa).

In terms of domain architecture, Biotinyl-binding spans 80–156; the sequence is YATIVSPMVG…DCGQALMKVE (77 aa). K122 bears the N6-biotinyllysine mark.

The protein localises to the plastid. It is found in the chloroplast. The protein operates within lipid metabolism; fatty acid biosynthesis. Functionally, this protein is a component of the acetyl coenzyme A carboxylase complex; first, biotin carboxylase catalyzes the carboxylation of the carrier protein and then the transcarboxylase transfers the carboxyl group to form malonyl-CoA. This chain is Biotin carboxyl carrier protein of acetyl-CoA carboxylase (accB), found in Porphyra purpurea (Red seaweed).